We begin with the raw amino-acid sequence, 203 residues long: Probable GTP-binding protein EngB (203 aa).

The EngB-type G domain occupies 21–196; it reads GAPEIAFLGR…WKKIFEAAGT (176 aa). GTP contacts are provided by residues 29–36, 55–59, 79–82, 146–149, and 175–177; these read GRSNVGKS, GRTQT, DLPG, TKID, and FSA. Mg(2+) is bound by residues serine 36 and threonine 57.

This sequence belongs to the TRAFAC class TrmE-Era-EngA-EngB-Septin-like GTPase superfamily. EngB GTPase family. It depends on Mg(2+) as a cofactor.

Necessary for normal cell division and for the maintenance of normal septation. The protein is Probable GTP-binding protein EngB of Koribacter versatilis (strain Ellin345).